A 64-amino-acid polypeptide reads, in one-letter code: Long neurotoxin MS5 (64 aa).

Cystine bridges form between Cys-3–Cys-24, Cys-6–Cys-11, Cys-17–Cys-41, Cys-45–Cys-57, and Cys-58–Cys-63.

Belongs to the three-finger toxin family. Ancestral subfamily. In terms of tissue distribution, expressed by the venom gland.

Its subcellular location is the secreted. Produces peripheral paralysis by blocking neuromuscular transmission at the postsynaptic site. Very weak inhibitor of the endogenous nicotinic acetylcholine receptors (nAChR) in the human rhabdomyosarcoma TE 671 cell line. This neurotoxin is lethal to zebrafish by injection at the back of the dorsolateral region, but is not toxic to mice by intraperitoneal injection. This Micrurus surinamensis (Surinam coral snake) protein is Long neurotoxin MS5.